A 161-amino-acid chain; its full sequence is 18.3 kDa class I heat shock protein (161 aa).

One can recognise a sHSP domain in the interval 48–161 (ETAAFANARI…KPQVKAINVY (114 aa)).

It belongs to the small heat shock protein (HSP20) family. As to quaternary structure, forms oligomeric structures.

Its subcellular location is the cytoplasm. In Oxybasis rubra (Red goosefoot), this protein is 18.3 kDa class I heat shock protein (HSP18).